Here is a 952-residue protein sequence, read N- to C-terminus: 2-oxoglutarate dehydrogenase E1 component (952 aa).

This sequence belongs to the alpha-ketoglutarate dehydrogenase family. Homodimer. Part of the 2-oxoglutarate dehydrogenase (OGDH) complex composed of E1 (2-oxoglutarate dehydrogenase), E2 (dihydrolipoamide succinyltransferase) and E3 (dihydrolipoamide dehydrogenase); the complex contains multiple copies of the three enzymatic components (E1, E2 and E3). Thiamine diphosphate serves as cofactor.

The catalysed reaction is N(6)-[(R)-lipoyl]-L-lysyl-[protein] + 2-oxoglutarate + H(+) = N(6)-[(R)-S(8)-succinyldihydrolipoyl]-L-lysyl-[protein] + CO2. Functionally, E1 component of the 2-oxoglutarate dehydrogenase (OGDH) complex which catalyzes the decarboxylation of 2-oxoglutarate, the first step in the conversion of 2-oxoglutarate to succinyl-CoA and CO(2). The polypeptide is 2-oxoglutarate dehydrogenase E1 component (Geobacillus sp. (strain WCH70)).